Consider the following 231-residue polypeptide: Cytochrome c oxidase subunit 2 (231 aa).

The Mitochondrial intermembrane segment spans residues 1–30; sequence MNNFFQGYNLLFQHSLFASYMDWFHAFNCS. A helical transmembrane segment spans residues 31 to 51; the sequence is LLLGVLVFVTLLFGYLIFSTF. At 52-64 the chain is on the mitochondrial matrix side; the sequence is YFKSKKIEYQFGE. The chain crosses the membrane as a helical span at residues 65–85; it reads LLCSIFPTIILLMQMVPSLSL. The Mitochondrial intermembrane segment spans residues 86–231; that stretch reads LYYYGLMNLD…FKSWCFGTME (146 aa). Cu cation contacts are provided by His164, Cys199, Glu201, Cys203, His207, and Met210. Glu201 contributes to the Mg(2+) binding site.

The protein belongs to the cytochrome c oxidase subunit 2 family. Component of the cytochrome c oxidase (complex IV, CIV), a multisubunit enzyme composed of a catalytic core of 3 subunits and several supernumerary subunits. The complex exists as a monomer or a dimer and forms supercomplexes (SCs) in the inner mitochondrial membrane with ubiquinol-cytochrome c oxidoreductase (cytochrome b-c1 complex, complex III, CIII). Cu cation is required as a cofactor.

The protein localises to the mitochondrion inner membrane. It catalyses the reaction 4 Fe(II)-[cytochrome c] + O2 + 8 H(+)(in) = 4 Fe(III)-[cytochrome c] + 2 H2O + 4 H(+)(out). Component of the cytochrome c oxidase, the last enzyme in the mitochondrial electron transport chain which drives oxidative phosphorylation. The respiratory chain contains 3 multisubunit complexes succinate dehydrogenase (complex II, CII), ubiquinol-cytochrome c oxidoreductase (cytochrome b-c1 complex, complex III, CIII) and cytochrome c oxidase (complex IV, CIV), that cooperate to transfer electrons derived from NADH and succinate to molecular oxygen, creating an electrochemical gradient over the inner membrane that drives transmembrane transport and the ATP synthase. Cytochrome c oxidase is the component of the respiratory chain that catalyzes the reduction of oxygen to water. Electrons originating from reduced cytochrome c in the intermembrane space (IMS) are transferred via the dinuclear copper A center (CU(A)) of subunit 2 and heme A of subunit 1 to the active site in subunit 1, a binuclear center (BNC) formed by heme A3 and copper B (CU(B)). The BNC reduces molecular oxygen to 2 water molecules using 4 electrons from cytochrome c in the IMS and 4 protons from the mitochondrial matrix. This chain is Cytochrome c oxidase subunit 2 (cox-2), found in Caenorhabditis briggsae.